The following is a 253-amino-acid chain: CTP:phosphoglutamine cytidylyltransferase (253 aa).

The enzyme catalyses N(5)-phospho-L-glutamine + CTP + H(+) = N(5)-(cytidine 5'-diphosphoramidyl)-L-glutamine + diphosphate. Its pathway is capsule biogenesis; capsule polysaccharide biosynthesis. Its function is as follows. Involved in the biosynthesis of the O-methyl phosphoramidate (MeOPN) group found on the capsular polysaccharide (CPS) of C.jejuni. Catalyzes the formation of CDP-L-glutamine from CTP and L-glutamine phosphate. In the presence of MnCTP, catalyzes the displacement of pyrophosphate from CTP using phosphoramidate, methyl phosphate, methyl phosphonate, phosphate, arsenate, ethanolamine phosphate, (R/S)-glycerol-1-phosphate, glycerol-2-phosphate, serinol phosphate, L-serine phosphate and 3-phospho-D-glycerate as substrate in addition to L-glutamine phosphate. The protein is CTP:phosphoglutamine cytidylyltransferase of Campylobacter jejuni subsp. jejuni serotype O:2 (strain ATCC 700819 / NCTC 11168).